An 840-amino-acid chain; its full sequence is MGLFDKIFGSYSDREVKRITPIVDKIDSLGPEMEKLSDEELKQKTFEFKDRYAKGESLDDMLPEAFAVCREASTRVLGMKHYREQLIGGIVLHQGRIAEMKTGEGKTLVATLPVYLNAIAGKGVHVITVNDYLATRDKEWMGQLYEFLGLTTGVIVHGLTNDQRREAYNADITYGTNNEFGFDYLRDNMVIYKEERVQRPLHYCIVDEVDSILIDEARTPLIISGAGSKSTDLYKIADFFVKKLREEEDYTIDEKAHAAMLTDKGVAEAEKAFGIENYADANNMELQHHITQALKANYVMKRDKDYMVKDDEIAIVDEFTGRLMEGRRYSDGLHQAIEAKEGVKVQRESKTLATITFQNYFRMYTKLAGMTGTALTEETEFREIYGLDVVVIPTHRPVQRQDHSDLVFKTAKGKYDAIVEEIIETHKTGQPVLVGTTSIEKSEYLSSLLKKKGVPHKVLNARYHEQEAEIVSHAGELGNITIATNMAGRGTDIKLGEGVLEVGGLKIIGTERHESRRIDNQLRGRSGRQGDKGHSRFYISLEDDLMRIFGSEKLQSVVDRLGLEETEAIESKMVTKSIENAQKKVEGNNFDIRKTLLGYDDVMNKQREVIYKQRSQVLEGENLEDSVQAMIEDVITNAVQAHLGNIDEDDFEKELGDLIKYLEDIMLPHGKFTVEELKTNSNEEITRKFIECAREIYKEKEEFVGSEQMREIERVIILRVVDTKWMDHIDDMDHLKQGIGLRAYKQQDPIQAYQMEGSAMFDEMINNIKIDTVRYLFHVKVEAEKPQRERVAKETGASHGGDSQEIKKKPVKKEPKVGRNDLCPCGSGKKYKSCCGREVV.

ATP contacts are provided by residues Gln85, 103–107, and Asp492; that span reads GEGKT. The interval 787 to 821 is disordered; sequence QRERVAKETGASHGGDSQEIKKKPVKKEPKVGRND. Basic and acidic residues predominate over residues 802–819; sequence DSQEIKKKPVKKEPKVGR. Zn(2+) contacts are provided by Cys823, Cys825, Cys834, and Cys835.

Belongs to the SecA family. As to quaternary structure, monomer and homodimer. Part of the essential Sec protein translocation apparatus which comprises SecA, SecYEG and auxiliary proteins SecDF. Other proteins may also be involved. It depends on Zn(2+) as a cofactor.

The protein resides in the cell membrane. Its subcellular location is the cytoplasm. The enzyme catalyses ATP + H2O + cellular proteinSide 1 = ADP + phosphate + cellular proteinSide 2.. Functionally, part of the Sec protein translocase complex. Interacts with the SecYEG preprotein conducting channel. Has a central role in coupling the hydrolysis of ATP to the transfer of proteins into and across the cell membrane, serving as an ATP-driven molecular motor driving the stepwise translocation of polypeptide chains across the membrane. The polypeptide is Protein translocase subunit SecA (Clostridium perfringens (strain 13 / Type A)).